The sequence spans 216 residues: Pyrophosphatase PpaX (216 aa).

The active-site Nucleophile is the D9.

Belongs to the HAD-like hydrolase superfamily. PpaX family. The cofactor is Mg(2+).

The enzyme catalyses diphosphate + H2O = 2 phosphate + H(+). Functionally, hydrolyzes pyrophosphate formed during P-Ser-HPr dephosphorylation by HPrK/P. Might play a role in controlling the intracellular pyrophosphate pool. In Bacillus cereus (strain B4264), this protein is Pyrophosphatase PpaX.